The sequence spans 157 residues: Protein MG115 homolog (157 aa).

It belongs to the CinA family.

This is Protein MG115 homolog from Mycoplasma pneumoniae (strain ATCC 29342 / M129 / Subtype 1) (Mycoplasmoides pneumoniae).